A 301-amino-acid chain; its full sequence is tRNA dimethylallyltransferase (301 aa).

Residue 9–16 participates in ATP binding; sequence GPTASGKS. Residue 11–16 participates in substrate binding; sequence TASGKS. The tract at residues 34–37 is interaction with substrate tRNA; that stretch reads DSMQ.

The protein belongs to the IPP transferase family. In terms of assembly, monomer. Mg(2+) is required as a cofactor.

It carries out the reaction adenosine(37) in tRNA + dimethylallyl diphosphate = N(6)-dimethylallyladenosine(37) in tRNA + diphosphate. Functionally, catalyzes the transfer of a dimethylallyl group onto the adenine at position 37 in tRNAs that read codons beginning with uridine, leading to the formation of N6-(dimethylallyl)adenosine (i(6)A). This is tRNA dimethylallyltransferase from Corynebacterium glutamicum (strain ATCC 13032 / DSM 20300 / JCM 1318 / BCRC 11384 / CCUG 27702 / LMG 3730 / NBRC 12168 / NCIMB 10025 / NRRL B-2784 / 534).